The following is a 370-amino-acid chain: Serine/threonine-protein kinase SAPK5 (370 aa).

A Protein kinase domain is found at 4-260 (YEPVREIGAG…MGEIKSHPWF (257 aa)). ATP-binding positions include 10 to 18 (IGAGNFGVA) and Lys33. The active-site Proton acceptor is the Asp123. Positions 312 to 370 (EAQTVPKPDKPVSGYGWGTDDDDDDQQPAEEEDEEDDYDRTVREVHASVDLDMSNLQIS) are disordered. Residues 330-349 (TDDDDDDQQPAEEEDEEDDY) show a composition bias toward acidic residues. Residues 350–360 (DRTVREVHASV) show a composition bias toward basic and acidic residues.

It belongs to the protein kinase superfamily. Ser/Thr protein kinase family. May be phosphorylated. In terms of tissue distribution, expressed in leaf blades, leaf sheaths and roots. Expressed in shoots and roots of young seedlings.

It localises to the cytoplasm. Its subcellular location is the nucleus. The enzyme catalyses L-seryl-[protein] + ATP = O-phospho-L-seryl-[protein] + ADP + H(+). It carries out the reaction L-threonyl-[protein] + ATP = O-phospho-L-threonyl-[protein] + ADP + H(+). With respect to regulation, activated by hyperosmotic stress. In terms of biological role, may play a role in signal transduction of hyperosmotic response. This chain is Serine/threonine-protein kinase SAPK5 (SAPK5), found in Oryza sativa subsp. japonica (Rice).